The primary structure comprises 370 residues: Histidinol-phosphate aminotransferase 1 (370 aa).

An N6-(pyridoxal phosphate)lysine modification is found at K222.

The protein belongs to the class-II pyridoxal-phosphate-dependent aminotransferase family. Histidinol-phosphate aminotransferase subfamily. As to quaternary structure, homodimer. It depends on pyridoxal 5'-phosphate as a cofactor.

The enzyme catalyses L-histidinol phosphate + 2-oxoglutarate = 3-(imidazol-4-yl)-2-oxopropyl phosphate + L-glutamate. It participates in amino-acid biosynthesis; L-histidine biosynthesis; L-histidine from 5-phospho-alpha-D-ribose 1-diphosphate: step 7/9. In Bacillus cereus (strain ATCC 10987 / NRS 248), this protein is Histidinol-phosphate aminotransferase 1.